Consider the following 476-residue polypeptide: mRNA cap guanine-N(7) methyltransferase (476 aa).

Positions 1-14 (MANSTKAEEYEKMS) are enriched in basic and acidic residues. Residues 1-128 (MANSTKAEEY…TGDGTQNKRK (128 aa)) are disordered. The span at 20–50 (ASVNSEAESSFSINENTTASGTGLSGKTSVC) shows a compositional bias: polar residues. Serine 24, serine 28, and serine 29 each carry phosphoserine. 3 stretches are compositionally biased toward basic and acidic residues: residues 54 to 68 (DTAR…DLVK), 84 to 93 (LDPEIVPEEK), and 107 to 117 (RETEDVPKDEY). Serine 118 bears the Phosphoserine mark. The Nuclear localization signal motif lies at 126-128 (KRK). The mRNA cap 0 methyltransferase domain maps to 167-475 (SRIFYLRNFN…IYLVFAFEKQ (309 aa)). 176–177 (NN) is a binding site for mRNA. Lysine 180, glycine 205, aspartate 227, aspartate 261, glutamine 284, and tyrosine 289 together coordinate S-adenosyl-L-methionine.

This sequence belongs to the class I-like SAM-binding methyltransferase superfamily. mRNA cap 0 methyltransferase family. In terms of assembly, interacts with importin alpha, leading to stimulate both RNA-binding and methyltransferase activity. Interaction with importin alpha and beta is required for its nuclear localization, importin beta dissociating in response to RanGTP, allowing RNMT-importin alpha to bind RNA substrates. Interacts with elongating form of polymerase II and RNGTT. Interacts with RAMAC, this interaction significantly enhances RNA-binding and cap methyltransferase activity.

The protein localises to the nucleus. It carries out the reaction a 5'-end (5'-triphosphoguanosine)-ribonucleoside in mRNA + S-adenosyl-L-methionine = a 5'-end (N(7)-methyl 5'-triphosphoguanosine)-ribonucleoside in mRNA + S-adenosyl-L-homocysteine. With respect to regulation, methyltransferase activity is activated by RAMAC. Its function is as follows. Catalytic subunit of the mRNA-capping methyltransferase RNMT:RAMAC complex that methylates the N7 position of the added guanosine to the 5'-cap structure of mRNAs. Binds RNA containing 5'-terminal GpppC. The polypeptide is mRNA cap guanine-N(7) methyltransferase (RNMT) (Macaca fascicularis (Crab-eating macaque)).